The sequence spans 143 residues: MYTCAKFVSTPSLIRRTSTVLSRSLSAVVVRRPETLTDESHSSLAVVPRPLTTSLTPSRSFQTSAISRDIDTAAKFIGAGAATVGVAGSGAGIGTVFGSLIIGYARNPSLKQQLFSYAILGFALSEAMGLFCLMVAFLILFAM.

A mitochondrion-targeting transit peptide spans 1–68; it reads MYTCAKFVST…RSFQTSAISR (68 aa). The chain crosses the membrane as a helical span at residues 84 to 104; that stretch reads VGVAGSGAGIGTVFGSLIIGY. Residue lysine 111 is modified to N6,N6,N6-trimethyllysine. A helical membrane pass occupies residues 119 to 139; it reads ILGFALSEAMGLFCLMVAFLI.

This sequence belongs to the ATPase C chain family. In terms of assembly, F-type ATPases have 2 components, CF(1) - the catalytic core - and CF(0) - the membrane proton channel. CF(1) has five subunits: alpha(3), beta(3), gamma(1), delta(1), epsilon(1). CF(0) has three main subunits: a, b and c. Interacts with DNAJC30; interaction is direct. Post-translationally, trimethylated by ATPSCKMT at Lys-111. Methylation is required for proper incorporation of the C subunit into the ATP synthase complex and mitochondrial respiration.

The protein resides in the mitochondrion membrane. Functionally, mitochondrial membrane ATP synthase (F(1)F(0) ATP synthase or Complex V) produces ATP from ADP in the presence of a proton gradient across the membrane which is generated by electron transport complexes of the respiratory chain. F-type ATPases consist of two structural domains, F(1) - containing the extramembraneous catalytic core and F(0) - containing the membrane proton channel, linked together by a central stalk and a peripheral stalk. During catalysis, ATP synthesis in the catalytic domain of F(1) is coupled via a rotary mechanism of the central stalk subunits to proton translocation. Part of the complex F(0) domain. A homomeric c-ring of probably 10 subunits is part of the complex rotary element. In Bos taurus (Bovine), this protein is ATP synthase F(0) complex subunit C2, mitochondrial.